Reading from the N-terminus, the 473-residue chain is MKTLYSLRRFYPVETLFNGTLALAGRDQETTGFAWWAGNARLINLSGKLLGAHVAHAGLIVFWAGAMNLFEVAHFVPEKPMYEQGLILLPHLATLGWGVGPGGEVIDTFPYFVSGVLHLISSAVLGFGGIYHALLGPETLEESFPFFGYVWKDRNKMTTILGIHLILLGIGAFLLVLKALYFGGVYDTWAPGGGDVRKITNLTLSPSVIFGYLLKSPFGGEGWIVSVDDLEDIIGGHVWLGSICIVGGIWHILTKPFAWARRALVWSGEAYLSYSLGALSVFGFIACCFVWFNNTAYPSEFYGPTGPEASQAQAFTFLVRDQRLGANVGSAQGPTGLGKYLMRSPTGEVIFGGETMRFWDLRAPWLEPLRGPNGLDLSRLKKDIQPWQERRSAEYMTHAPLGSLNSVGGVATEINAVNYVSPRSWLATSHFVLGFFLFVGHLWHAGRARAAAAGFEKGIDRDFEPVLSMTPLN.

Residues 1–14 (MKTLYSLRRFYPVE) constitute a propeptide that is removed on maturation. Position 15 is an N-acetylthreonine (threonine 15). At threonine 15 the chain carries Phosphothreonine. The next 5 membrane-spanning stretches (helical) occupy residues 69-93 (LFEV…PHLA), 134-155 (LLGP…KDRN), 178-200 (KALY…RKIT), 255-275 (KPFA…LSYS), and 291-312 (WFNN…ASQA). Glutamate 367 contacts [CaMn4O5] cluster. A helical transmembrane segment spans residues 447–471 (RARAAAAGFEKGIDRDFEPVLSMTP).

The protein belongs to the PsbB/PsbC family. PsbC subfamily. As to quaternary structure, PSII is composed of 1 copy each of membrane proteins PsbA, PsbB, PsbC, PsbD, PsbE, PsbF, PsbH, PsbI, PsbJ, PsbK, PsbL, PsbM, PsbT, PsbX, PsbY, PsbZ, Psb30/Ycf12, at least 3 peripheral proteins of the oxygen-evolving complex and a large number of cofactors. It forms dimeric complexes. It depends on Binds multiple chlorophylls and provides some of the ligands for the Ca-4Mn-5O cluster of the oxygen-evolving complex. It may also provide a ligand for a Cl- that is required for oxygen evolution. PSII binds additional chlorophylls, carotenoids and specific lipids. as a cofactor.

It is found in the plastid. It localises to the chloroplast thylakoid membrane. Its function is as follows. One of the components of the core complex of photosystem II (PSII). It binds chlorophyll and helps catalyze the primary light-induced photochemical processes of PSII. PSII is a light-driven water:plastoquinone oxidoreductase, using light energy to abstract electrons from H(2)O, generating O(2) and a proton gradient subsequently used for ATP formation. The protein is Photosystem II CP43 reaction center protein of Buxus microphylla (Littleleaf boxwood).